Here is a 431-residue protein sequence, read N- to C-terminus: Glucose-1-phosphate adenylyltransferase (431 aa).

Residues Gly-163, 178–179 (EK), and Ser-210 each bind alpha-D-glucose 1-phosphate.

Belongs to the bacterial/plant glucose-1-phosphate adenylyltransferase family. As to quaternary structure, homotetramer.

It carries out the reaction alpha-D-glucose 1-phosphate + ATP + H(+) = ADP-alpha-D-glucose + diphosphate. It functions in the pathway glycan biosynthesis; glycogen biosynthesis. Functionally, involved in the biosynthesis of ADP-glucose, a building block required for the elongation reactions to produce glycogen. Catalyzes the reaction between ATP and alpha-D-glucose 1-phosphate (G1P) to produce pyrophosphate and ADP-Glc. This Synechococcus sp. (strain WH7803) protein is Glucose-1-phosphate adenylyltransferase.